The primary structure comprises 188 residues: HTH-type transcriptional regulator Mb3439c (188 aa).

The 61-residue stretch at 17 to 77 (EEVAAAILQA…AVLDHLGTKL (61 aa)) folds into the HTH tetR-type domain. Residues 40-59 (SIRDIAARSKVNHGLVFRHF) constitute a DNA-binding region (H-T-H motif).

Functionally, negatively regulates the expression of sulfate ester dioxygenase Mb3440 and its own expression. The protein is HTH-type transcriptional regulator Mb3439c of Mycobacterium bovis (strain ATCC BAA-935 / AF2122/97).